The chain runs to 227 residues: MRATPPRDDTYPSNENFKEKYPMSYVPIVIEQTSRGERAYDIYSRLLKERIIFVCGPIEDHMANLITAQLLFLEAENPEKDIYMYINSPGGVVTAGLAIYDTMQYIKPKVATLCIGQACSMGSFLLCGGEKGMRYSLPHSRVMIHQPSGGYRGQATDIEIHAQETLKIKKILNSLYSKHTGQDVKHVEKSMERDNFMSPEEAKKFGIIDKIITHRDIKLLKDKEQGQ.

The active-site Nucleophile is the Ser-120. Residue His-145 is part of the active site.

The protein belongs to the peptidase S14 family. As to quaternary structure, fourteen ClpP subunits assemble into 2 heptameric rings which stack back to back to give a disk-like structure with a central cavity, resembling the structure of eukaryotic proteasomes.

Its subcellular location is the cytoplasm. The catalysed reaction is Hydrolysis of proteins to small peptides in the presence of ATP and magnesium. alpha-casein is the usual test substrate. In the absence of ATP, only oligopeptides shorter than five residues are hydrolyzed (such as succinyl-Leu-Tyr-|-NHMec, and Leu-Tyr-Leu-|-Tyr-Trp, in which cleavage of the -Tyr-|-Leu- and -Tyr-|-Trp bonds also occurs).. Cleaves peptides in various proteins in a process that requires ATP hydrolysis. Has a chymotrypsin-like activity. Plays a major role in the degradation of misfolded proteins. The protein is ATP-dependent Clp protease proteolytic subunit of Rickettsia bellii (strain RML369-C).